A 341-amino-acid polypeptide reads, in one-letter code: MDHRELWPYGLRVLVIDDDCSYLSVMEDLLLKCSYKVTTYKNVREAVPFILDNPQIVDLVISDAFFPTEDGLLILQEVTSKFGIPTVIMASSGDTNTVMKYVANGAFDFLLKPVRIEELSNIWQHIFRKQMQDHKNNNMVGNLEKPGHPPSILAMARATPATTRSTATEASLAPLENEVRDDMVNYNGEITDIRDLGKSRLTWTTQLHRQFIAAVNHLGEDKAVPKKILGIMKVKHLTREQVASHLQKYRMQLKKSIPTTSKHGATLSSTALDKTQDHPSRSQYFNQDGCMEIMDYSLPRDDLSSGSECMLEELNDYSSEGFQDFRWDSDKQEYGPCFWNF.

Positions 12–127 constitute a Response regulatory domain; sequence RVLVIDDDCS…ELSNIWQHIF (116 aa). D63 is modified (4-aspartylphosphate). The 60-residue stretch at 195-254 folds into the HTH myb-type domain; it reads DLGKSRLTWTTQLHRQFIAAVNHLGEDKAVPKKILGIMKVKHLTREQVASHLQKYRMQLK. The segment at residues 225 to 250 is a DNA-binding region (H-T-H motif); the sequence is PKKILGIMKVKHLTREQVASHLQKYR.

Post-translationally, two-component system major event consists of a His-to-Asp phosphorelay between a sensor histidine kinase (HK) and a response regulator (RR). In plants, the His-to-Asp phosphorelay involves an additional intermediate named Histidine-containing phosphotransfer protein (HPt). This multistep phosphorelay consists of a His-Asp-His-Asp sequential transfer of a phosphate group between first a His and an Asp of the HK protein, followed by the transfer to a conserved His of the HPt protein and finally the transfer to an Asp in the receiver domain of the RR protein.

Its subcellular location is the nucleus. In terms of biological role, transcriptional activator that acts as a floral inducer to promote short-day (SD) flowering pathway. Activates Hd3a and other FT-like genes independently from Hd1. May also activate MADS-box transcription factors involved in flowering regulation. The polypeptide is Two-component response regulator EHD1 (EHD1) (Oryza sativa subsp. indica (Rice)).